A 216-amino-acid polypeptide reads, in one-letter code: Probable Golgi SNAP receptor complex member 2 (216 aa).

Over 1 to 194 (MESLYHQTNN…IERRLVEDRR (194 aa)) the chain is Cytoplasmic. Positions 62–103 (QRQSSKLRVDQLKYDLRHLQTSLQTARERRQRRMQEISEREQ) form a coiled coil. A helical; Anchor for type IV membrane protein transmembrane segment spans residues 195–215 (IFIGGVVVTLLIIALIIYFLV). A topological domain (vesicular) is located at residue L216.

This sequence belongs to the GOSR2 family. As to quaternary structure, part of a unique SNARE complex.

Its subcellular location is the golgi apparatus. It localises to the cis-Golgi network membrane. It is found in the golgi apparatus membrane. The protein localises to the endoplasmic reticulum membrane. Involved in transport of proteins from the cis/medial-Golgi to the trans-Golgi network. This is Probable Golgi SNAP receptor complex member 2 from Drosophila melanogaster (Fruit fly).